Here is a 120-residue protein sequence, read N- to C-terminus: Holo-[acyl-carrier-protein] synthase (120 aa).

Residues Asp8 and Glu58 each contribute to the Mg(2+) site.

This sequence belongs to the P-Pant transferase superfamily. AcpS family. Requires Mg(2+) as cofactor.

It is found in the cytoplasm. The catalysed reaction is apo-[ACP] + CoA = holo-[ACP] + adenosine 3',5'-bisphosphate + H(+). Its function is as follows. Transfers the 4'-phosphopantetheine moiety from coenzyme A to a Ser of acyl-carrier-protein. The protein is Holo-[acyl-carrier-protein] synthase of Limosilactobacillus reuteri (strain DSM 20016) (Lactobacillus reuteri).